The sequence spans 3330 residues: Laminin subunit alpha-3 (3330 aa).

The first 31 residues, 1-31 (MAVALGRAPRSLPLLLTLLLLLLLRMSPSWS), serve as a signal peptide directing secretion. A Laminin N-terminal domain is found at 40–295 (SSRSLHPPYF…SIKDISVGGR (256 aa)). A glycan (N-linked (GlcNAc...) asparagine) is linked at Asn139. The interval 295–725 (RCVCNGHAEA…NNYYFPDLHH (431 aa)) is domain V. Intrachain disulfides connect Cys296-Cys305, Cys298-Cys316, Cys318-Cys327, Cys330-Cys350, Cys353-Cys362, Cys355-Cys387, Cys390-Cys399, Cys402-Cys420, Cys423-Cys433, Cys425-Cys440, Cys442-Cys451, Cys454-Cys464, Cys488-Cys500, Cys490-Cys506, Cys508-Cys517, Cys520-Cys530, Cys533-Cys545, Cys535-Cys552, Cys554-Cys563, Cys566-Cys583, Cys628-Cys642, Cys630-Cys649, Cys651-Cys660, Cys663-Cys678, Cys681-Cys693, Cys683-Cys700, and Cys702-Cys711. Laminin EGF-like domains follow at residues 296–350 (CVCN…HNEC), 353–420 (CNCH…LHGC), 423–464 (CSCD…FPFC), 488–530 (CDCN…FPIC), 533–576 (CQCS…FPYC), 582–625 (VCHP…PRGC), 628–678 (CQCH…YFGC), and 681–725 (CQCD…DLHH). Asn445 carries N-linked (GlcNAc...) asparagine glycosylation. A domain IV 1 (domain IV B) region spans residues 793–1262 (TEAISGRITL…VAFYHNGAIP (470 aa)). Positions 1263-1462 (CECDPAGTAG…CFCFGVNTDC (200 aa)) are domain III B. 12 disulfide bridges follow: Cys1309-Cys1316, Cys1311-Cys1323, Cys1325-Cys1334, Cys1337-Cys1350, Cys1353-Cys1368, Cys1355-Cys1375, Cys1377-Cys1386, Cys1389-Cys1399, Cys1402-Cys1414, Cys1404-Cys1421, Cys1423-Cys1432, and Cys1435-Cys1450. Laminin EGF-like domains follow at residues 1309 to 1352 (CNCG…GCDV), 1353 to 1401 (CNCS…ECVP), and 1402 to 1452 (CSCN…GCTK). Residue Asn1354 is glycosylated (N-linked (GlcNAc...) asparagine). In terms of domain architecture, Laminin EGF-like 12; first part spans 1453–1462 (CFCFGVNTDC). The 185-residue stretch at 1466 to 1650 (HKQRAKFVDM…SGPRAHLVEM (185 aa)) folds into the Laminin IV type A domain. Positions 1651 to 1683 (CACPPDYTGDSCQGCRPGYYWDNKSLPVGRCVP) constitute a Laminin EGF-like 12; second part domain. Positions 1651–1818 (CACPPDYTGD…DGSPAEECDD (168 aa)) are domain III A. N-linked (GlcNAc...) asparagine glycosylation occurs at Asn1673. Disulfide bonds link Cys1684–Cys1693, Cys1686–Cys1700, Cys1703–Cys1712, Cys1715–Cys1728, Cys1731–Cys1743, Cys1733–Cys1752, Cys1754–Cys1763, and Cys1766–Cys1781. Laminin EGF-like domains are found at residues 1684-1730 (CNCN…SCRV) and 1731-1783 (CPCP…SCQP). Residues 1784–1818 (CNCNSNGQLGPCDPLTGDCVNQEPKDGSPAEECDD) form the Laminin EGF-like 15; truncated domain. Residues 1819–2385 (CDSCVMTLLN…ARDAANKVAI (567 aa)) are domain II and I. Coiled-coil stretches lie at residues 1851-1980 (TGAL…LRSR), 2012-2057 (VENN…HENE), 2088-2165 (LLQT…GDEL), and 2211-2238 (KRAK…QQVS). Asn2159 is a glycosylation site (N-linked (GlcNAc...) asparagine). N-linked (GlcNAc...) asparagine glycosylation is present at Asn2261. A Cell attachment site motif is present at residues 2274-2276 (RGD). Residues 2318 to 2383 (SARREDFSKA…QQARDAANKV (66 aa)) adopt a coiled-coil conformation. N-linked (GlcNAc...) asparagine glycosylation is found at Asn2332, Asn2361, Asn2498, Asn2580, and Asn2747. 5 Laminin G-like domains span residues 2386–2587 (PMRF…VEPC), 2594–2756 (SDKN…TKKC), 2763–2923 (VRTA…LGGC), 2983–3147 (ALQF…VSPC), and 3154–3327 (KGIY…LNGC). 3 disulfide bridges follow: Cys2557–Cys2587, Cys2733–Cys2756, and Cys2891–Cys2923. Asn3094 carries N-linked (GlcNAc...) asparagine glycosylation. Cys3124 and Cys3147 are oxidised to a cystine. N-linked (GlcNAc...) asparagine glycosylation is present at Asn3270. A disulfide bond links Cys3299 and Cys3327.

In terms of assembly, laminin is a complex glycoprotein, consisting of three different polypeptide chains (alpha, beta, gamma), which are bound to each other by disulfide bonds into a cross-shaped molecule comprising one long and three short arms with globules at each end. Alpha-3 is a subunit of laminin-5 (laminin-332 or epiligrin/kalinin/nicein), laminin-6 (laminin-311 or K-laminin) and laminin-7 (laminin-321 or KS-laminin). In terms of tissue distribution, basal membrane of the upper alimentary tract and urinary and nasal epithelia, salivary glands and teeth (both variants). Isoform A is predominantly expressed in skin, hair follicles and developing neurons of the trigeminal ganglion. Isoform B was found in bronchi, alveoli, stomach, intestinal crypts, whisker pads, CNS, telencephalic neuroectoderm, thalamus, Rathke pouch and periventricular subependymal germinal layer.

The protein resides in the secreted. It localises to the extracellular space. The protein localises to the extracellular matrix. Its subcellular location is the basement membrane. Functionally, binding to cells via a high affinity receptor, laminin is thought to mediate the attachment, migration and organization of cells into tissues during embryonic development by interacting with other extracellular matrix components. In terms of biological role, laminin-5 is thought to be involved in (1) cell adhesion via integrin alpha-3/beta-1 in focal adhesion and integrin alpha-6/beta-4 in hemidesmosomes, (2) signal transduction via tyrosine phosphorylation of pp125-FAK and p80, (3) differentiation of keratinocytes. This Mus musculus (Mouse) protein is Laminin subunit alpha-3 (Lama3).